Here is a 364-residue protein sequence, read N- to C-terminus: tRNA 2-selenouridine synthase (364 aa).

In terms of domain architecture, Rhodanese spans 14–137 (LIADTPIIDV…LRQTAIQATI (124 aa)). Residue Cys-97 is the S-selanylcysteine intermediate of the active site.

It belongs to the SelU family. Monomer.

The enzyme catalyses 5-methylaminomethyl-2-thiouridine(34) in tRNA + selenophosphate + (2E)-geranyl diphosphate + H2O + H(+) = 5-methylaminomethyl-2-selenouridine(34) in tRNA + (2E)-thiogeraniol + phosphate + diphosphate. The catalysed reaction is 5-methylaminomethyl-2-thiouridine(34) in tRNA + (2E)-geranyl diphosphate = 5-methylaminomethyl-S-(2E)-geranyl-thiouridine(34) in tRNA + diphosphate. It catalyses the reaction 5-methylaminomethyl-S-(2E)-geranyl-thiouridine(34) in tRNA + selenophosphate + H(+) = 5-methylaminomethyl-2-(Se-phospho)selenouridine(34) in tRNA + (2E)-thiogeraniol. It carries out the reaction 5-methylaminomethyl-2-(Se-phospho)selenouridine(34) in tRNA + H2O = 5-methylaminomethyl-2-selenouridine(34) in tRNA + phosphate. In terms of biological role, involved in the post-transcriptional modification of the uridine at the wobble position (U34) of tRNA(Lys), tRNA(Glu) and tRNA(Gln). Catalyzes the conversion of 2-thiouridine (S2U-RNA) to 2-selenouridine (Se2U-RNA). Acts in a two-step process involving geranylation of 2-thiouridine (S2U) to S-geranyl-2-thiouridine (geS2U) and subsequent selenation of the latter derivative to 2-selenouridine (Se2U) in the tRNA chain. The protein is tRNA 2-selenouridine synthase of Escherichia coli (strain SE11).